A 344-amino-acid chain; its full sequence is L-rhamnose-proton symporter (344 aa).

10 consecutive transmembrane segments (helical) span residues 4 to 24, 38 to 58, 68 to 88, 101 to 121, 137 to 157, 175 to 195, 214 to 234, 259 to 279, 290 to 310, and 323 to 343; these read AITM…CFYA, WSVG…ALLL, FSLS…IGNI, MGIG…TPII, TLLG…AGQL, LVLA…MNAA, LPSY…FCFI, VLLS…YAWG, ISWM…GLVL, and VLSL…IGMA.

The protein belongs to the L-rhamnose transporter (TC 2.A.7.6) family.

The protein resides in the cell inner membrane. It catalyses the reaction L-rhamnopyranose(in) + H(+)(in) = L-rhamnopyranose(out) + H(+)(out). Its function is as follows. Uptake of L-rhamnose across the cytoplasmic membrane with the concomitant transport of protons into the cell (symport system). This is L-rhamnose-proton symporter from Shigella flexneri.